Consider the following 469-residue polypeptide: 3-isopropylmalate dehydratase large subunit (469 aa).

Positions 350, 410, and 413 each coordinate [4Fe-4S] cluster.

The protein belongs to the aconitase/IPM isomerase family. LeuC type 1 subfamily. In terms of assembly, heterodimer of LeuC and LeuD. It depends on [4Fe-4S] cluster as a cofactor.

The catalysed reaction is (2R,3S)-3-isopropylmalate = (2S)-2-isopropylmalate. Its pathway is amino-acid biosynthesis; L-leucine biosynthesis; L-leucine from 3-methyl-2-oxobutanoate: step 2/4. Its function is as follows. Catalyzes the isomerization between 2-isopropylmalate and 3-isopropylmalate, via the formation of 2-isopropylmaleate. The sequence is that of 3-isopropylmalate dehydratase large subunit from Rhodopseudomonas palustris (strain TIE-1).